The chain runs to 95 residues: Co-chaperonin GroES (95 aa).

It belongs to the GroES chaperonin family. Heptamer of 7 subunits arranged in a ring. Interacts with the chaperonin GroEL.

Its subcellular location is the cytoplasm. In terms of biological role, together with the chaperonin GroEL, plays an essential role in assisting protein folding. The GroEL-GroES system forms a nano-cage that allows encapsulation of the non-native substrate proteins and provides a physical environment optimized to promote and accelerate protein folding. GroES binds to the apical surface of the GroEL ring, thereby capping the opening of the GroEL channel. In Neisseria meningitidis serogroup C (strain 053442), this protein is Co-chaperonin GroES.